The primary structure comprises 436 residues: Protein arginine methyltransferase NDUFAF7, mitochondrial (436 aa).

A mitochondrion-targeting transit peptide spans 1–41 (MNALVRRCVARTGIPSIWRRKCFSSGNEPAESNHVTPMLRH). The tract at residues 413-436 (QGGKACQSEAPSTSVPGFDELVWH) is disordered.

This sequence belongs to the NDUFAF7 family. As to quaternary structure, interacts with NDUFS2.

Its subcellular location is the mitochondrion. The catalysed reaction is L-arginyl-[protein] + 2 S-adenosyl-L-methionine = N(omega),N(omega)'-dimethyl-L-arginyl-[protein] + 2 S-adenosyl-L-homocysteine + 2 H(+). In terms of biological role, arginine methyltransferase involved in the assembly or stability of mitochondrial NADH:ubiquinone oxidoreductase complex (complex I). Acts by mediating symmetric dimethylation of 'Arg-118' of NDUFS2 after it assembles into the complex I, stabilizing the early intermediate complex. The polypeptide is Protein arginine methyltransferase NDUFAF7, mitochondrial (Rattus norvegicus (Rat)).